The primary structure comprises 282 residues: Protoheme IX farnesyltransferase (282 aa).

Transmembrane regions (helical) follow at residues 13-33 (VAGM…GAAG), 36-56 (MVTS…FNQI), 74-96 (ASGR…PALI), 101-120 (AGGV…YNGV), 129-149 (AFSL…GWLA), 156-176 (SPEI…HFWL), 207-227 (LWYA…FIAE), 232-252 (IAVC…LASP), and 261-281 (VSML…SGII).

It belongs to the UbiA prenyltransferase family. Protoheme IX farnesyltransferase subfamily.

The protein localises to the cell inner membrane. The catalysed reaction is heme b + (2E,6E)-farnesyl diphosphate + H2O = Fe(II)-heme o + diphosphate. Its pathway is porphyrin-containing compound metabolism; heme O biosynthesis; heme O from protoheme: step 1/1. Functionally, converts heme B (protoheme IX) to heme O by substitution of the vinyl group on carbon 2 of heme B porphyrin ring with a hydroxyethyl farnesyl side group. This Oleidesulfovibrio alaskensis (strain ATCC BAA-1058 / DSM 17464 / G20) (Desulfovibrio alaskensis) protein is Protoheme IX farnesyltransferase.